Reading from the N-terminus, the 973-residue chain is UvrABC system protein A (973 aa).

34–41 (GLSGSGKS) is an ATP binding site. ABC transporter domains are found at residues 330–609 (WAKS…PNSI) and 629–958 (AKKN…QFLK). 662-669 (GVSGGGKS) provides a ligand contact to ATP. The segment at 761–787 (CEACQGDGVIKIEMHFLPDVYVTCDVC) adopts a C4-type zinc-finger fold.

The protein belongs to the ABC transporter superfamily. UvrA family. Forms a heterotetramer with UvrB during the search for lesions.

Its subcellular location is the cytoplasm. Its function is as follows. The UvrABC repair system catalyzes the recognition and processing of DNA lesions. UvrA is an ATPase and a DNA-binding protein. A damage recognition complex composed of 2 UvrA and 2 UvrB subunits scans DNA for abnormalities. When the presence of a lesion has been verified by UvrB, the UvrA molecules dissociate. In Mesorhizobium japonicum (strain LMG 29417 / CECT 9101 / MAFF 303099) (Mesorhizobium loti (strain MAFF 303099)), this protein is UvrABC system protein A.